The chain runs to 225 residues: LexA repressor (225 aa).

A DNA-binding region (H-T-H motif) is located at residues 26–46 (YEEMKDSLNLKSKSGIHRLIS). Active-site for autocatalytic cleavage activity residues include Ser146 and Lys184.

Belongs to the peptidase S24 family. Homodimer.

It carries out the reaction Hydrolysis of Ala-|-Gly bond in repressor LexA.. Represses a number of genes involved in the response to DNA damage (SOS response), including recA and lexA. In the presence of single-stranded DNA, RecA interacts with LexA causing an autocatalytic cleavage which disrupts the DNA-binding part of LexA, leading to derepression of the SOS regulon and eventually DNA repair. The chain is LexA repressor from Pelagibacter ubique (strain HTCC1062).